We begin with the raw amino-acid sequence, 78 residues long: UPF0270 protein ECA4061 (78 aa).

This sequence belongs to the UPF0270 family.

The polypeptide is UPF0270 protein ECA4061 (Pectobacterium atrosepticum (strain SCRI 1043 / ATCC BAA-672) (Erwinia carotovora subsp. atroseptica)).